The sequence spans 563 residues: Protein NRT1/ PTR FAMILY 5.9 (563 aa).

A helical membrane pass occupies residues 56–76 (TWAGFTSMLPLFSAPLADTYW). Thr81 is subject to Phosphothreonine. 10 helical membrane passes run 82 to 102 (ILAS…TAFA), 110 to 130 (TISS…LGVL), 168 to 188 (FFQL…TVMA), 194 to 214 (FGWV…ILVF), 317 to 337 (FPIW…ATFF), 362 to 382 (TITL…IPIT), 394 to 414 (VMER…IAAI), 441 to 461 (IFWL…TVVG), 479 to 499 (FALY…LISI), and 528 to 548 (WLLA…CKFF).

This sequence belongs to the major facilitator superfamily. Proton-dependent oligopeptide transporter (POT/PTR) (TC 2.A.17) family. Expressed in roots and flowers.

It localises to the membrane. The polypeptide is Protein NRT1/ PTR FAMILY 5.9 (NPF5.9) (Arabidopsis thaliana (Mouse-ear cress)).